The sequence spans 336 residues: Solute-binding protein Csal_2479 (336 aa).

The N-terminal stretch at Met-1–Ala-33 is a signal peptide. Beta-D-glucuronate-binding positions include His-42, Gln-80, Arg-156, Arg-177, Tyr-200, Asn-217–Asn-218, and Glu-244.

It belongs to the bacterial solute-binding protein 7 family. The complex is comprised of an extracytoplasmic solute-binding protein and a heteromeric permease formed by two transmembrane proteins.

The protein localises to the periplasm. In terms of biological role, solute-binding protein that binds D-glucuronate (in vitro). Probably part of a tripartite ATP-independent periplasmic (TRAP) transport system that mediates solute transport into the cytoplasm. The chain is Solute-binding protein Csal_2479 from Chromohalobacter salexigens (strain ATCC BAA-138 / DSM 3043 / CIP 106854 / NCIMB 13768 / 1H11).